The following is a 329-amino-acid chain: BRISC and BRCA1-A complex member 1 (329 aa).

At M1 the chain carries N-acetylmethionine. The interval 1-86 (MEVAEPSSPT…PPAPEVQIRT (86 aa)) is disordered. S8 carries the phosphoserine modification. Over residues 10–19 (TEEEEEEEEH) the composition is skewed to acidic residues. Phosphoserine is present on residues S29, S49, S57, and S62. T65 carries the phosphothreonine modification. S66 bears the Phosphoserine mark. The tract at residues 95–298 (VIICLDLSEE…LELHNCMVKL (204 aa)) is VWFA-like.

This sequence belongs to the BABAM1 family. Component of the ARISC complex, at least composed of UIMC1/RAP80, ABRAXAS1, BRCC3/BRCC36, BABAM2 and BABAM1/NBA1. Component of the BRCA1-A complex, at least composed of BRCA1, BARD1, UIMC1/RAP80, ABRAXAS1, BRCC3/BRCC36, BABAM2 and BABAM1/NBA1. In the BRCA1-A complex, interacts directly with ABRAXAS1 and BABAM2. Component of the BRISC complex, at least composed of ABRAXAS2, BRCC3/BRCC36, BABAM2 and BABAM1/NBA1. Identified in a complex with SHMT2 and the other subunits of the BRISC complex.

Its subcellular location is the cytoplasm. The protein resides in the nucleus. Its function is as follows. Component of the BRCA1-A complex, a complex that specifically recognizes 'Lys-63'-linked ubiquitinated histones H2A and H2AX at DNA lesions sites, leading to target the BRCA1-BARD1 heterodimer to sites of DNA damage at double-strand breaks (DSBs). The BRCA1-A complex also possesses deubiquitinase activity that specifically removes 'Lys-63'-linked ubiquitin on histones H2A and H2AX. In the BRCA1-A complex, it is required for the complex integrity and its localization at DSBs. Component of the BRISC complex, a multiprotein complex that specifically cleaves 'Lys-63'-linked ubiquitin in various substrates. In these 2 complexes, it is probably required to maintain the stability of BABAM2 and help the 'Lys-63'-linked deubiquitinase activity mediated by BRCC3/BRCC36 component. The BRISC complex is required for normal mitotic spindle assembly and microtubule attachment to kinetochores via its role in deubiquitinating NUMA1. Plays a role in interferon signaling via its role in the deubiquitination of the interferon receptor IFNAR1; deubiquitination increases IFNAR1 activity by enhancing its stability and cell surface expression. Down-regulates the response to bacterial lipopolysaccharide (LPS) via its role in IFNAR1 deubiquitination. The protein is BRISC and BRCA1-A complex member 1 (BABAM1) of Callithrix jacchus (White-tufted-ear marmoset).